A 598-amino-acid polypeptide reads, in one-letter code: Cytochrome P450 monooxygenase phmB (598 aa).

A helical transmembrane segment spans residues Val107–Leu127. Asn171, Asn428, and Asn494 each carry an N-linked (GlcNAc...) asparagine glycan. Residue Cys542 coordinates heme. Residues Asn549 and Asn581 are each glycosylated (N-linked (GlcNAc...) asparagine).

This sequence belongs to the cytochrome P450 family. Requires heme as cofactor.

It is found in the membrane. It participates in mycotoxin biosynthesis. Functionally, cytochrome P450 monooxygenase; part of the gene cluster that mediates the biosynthesis of the mycotoxins phomacins, leucine-derived cytochalasans with potent actin polymerization-inhibitory activities and monocot-specific antigerminative activities. The first step in the pathway is catalyzed by the hybrid PKS-NRPS phmA, assisted by the enoyl reductase phmE, that are responsible for fusion of the leucine precursor and the polyketide backbone to produce a 2-pyrrolidone intermediate. The polyketide synthase module (PKS) of phmA is responsible for the synthesis of the polyketide backbone and the downstream nonribosomal peptide synthetase (NRPS) amidates the carboxyl end of the polyketide with the leucine precursor. Because phmA lacks a designated enoylreductase (ER) domain, the required activity is provided the enoyl reductase phmE. Reduction by the hydrolyase phmG, followed by dehydration and intra-molecular Diels-Alder cyclization by the Diels-Alderase phmD then yield the required isoindolone-fused macrocycle. A number of oxidative steps catalyzed by the tailoring cytochrome P450 monooxygenase phmB, the FAD-linked oxidoreductase phmC and the short-chain dehydrogenase/reductase phmF, are further required to afford the final products, phomacin D and phomacin E. The sequence is that of Cytochrome P450 monooxygenase phmB from Phaeosphaeria nodorum (strain SN15 / ATCC MYA-4574 / FGSC 10173) (Glume blotch fungus).